The chain runs to 311 residues: Protoheme IX farnesyltransferase (311 aa).

A run of 9 helical transmembrane segments spans residues 33–53 (VVMLMLLTSLIGMLLATPSPA), 55–75 (LWLLVLGNLGIGLCAGAAAAV), 104–124 (NALLFSALLGGVGLWILSSFI), 127–147 (LTAWLTLASLLGYAVIYTLFL), 155–175 (IVIGGLAGAAPPLLGWTAVTG), 181–201 (GLLLVLIIFAWTPPHFWALAL), 228–248 (IVLYTVILIAVTLLPFATRMM), 252–272 (YLVGALVLGAGFLYRALKLLV), and 287–307 (IIYLMALFVVMLVDHYLFPIP).

It belongs to the UbiA prenyltransferase family. Protoheme IX farnesyltransferase subfamily.

The protein localises to the cell inner membrane. The catalysed reaction is heme b + (2E,6E)-farnesyl diphosphate + H2O = Fe(II)-heme o + diphosphate. The protein operates within porphyrin-containing compound metabolism; heme O biosynthesis; heme O from protoheme: step 1/1. Its function is as follows. Converts heme B (protoheme IX) to heme O by substitution of the vinyl group on carbon 2 of heme B porphyrin ring with a hydroxyethyl farnesyl side group. This Teredinibacter turnerae (strain ATCC 39867 / T7901) protein is Protoheme IX farnesyltransferase.